We begin with the raw amino-acid sequence, 498 residues long: Protein DETOXIFICATION 30 (498 aa).

Helical transmembrane passes span 64–86 (YSLG…AAVS), 91–111 (VIAG…ETLC), 136–156 (VTAV…AFIG), 161–181 (ISSA…AYAV), 197–217 (VMAA…WFVI), 227–247 (LAVV…VYIF), 277–297 (AVML…AGYL), 302–322 (ISVA…MIAI), 349–369 (LVAV…LLIF), 393–413 (ILAV…VAVG), 419–439 (VVAY…GLLL), and 447–467 (VMGI…VLTW).

Belongs to the multi antimicrobial extrusion (MATE) (TC 2.A.66.1) family.

The protein localises to the membrane. The protein is Protein DETOXIFICATION 30 of Arabidopsis thaliana (Mouse-ear cress).